The chain runs to 125 residues: Large ribosomal subunit protein bL20 (125 aa).

It belongs to the bacterial ribosomal protein bL20 family.

Binds directly to 23S ribosomal RNA and is necessary for the in vitro assembly process of the 50S ribosomal subunit. It is not involved in the protein synthesizing functions of that subunit. This is Large ribosomal subunit protein bL20 from Thermobifida fusca (strain YX).